The primary structure comprises 223 residues: Probable GTP-binding protein EngB (223 aa).

In terms of domain architecture, EngB-type G spans 25 to 199 (TGVEIAFAGR…SRLLQDWFDE (175 aa)). Residues 33 to 40 (GRSNAGKS), 60 to 64 (GRTQH), 78 to 81 (DLPG), 145 to 148 (TKAD), and 178 to 180 (FSS) each bind GTP. Residues Ser40 and Thr62 each coordinate Mg(2+).

Belongs to the TRAFAC class TrmE-Era-EngA-EngB-Septin-like GTPase superfamily. EngB GTPase family. It depends on Mg(2+) as a cofactor.

Necessary for normal cell division and for the maintenance of normal septation. In Nitrosomonas eutropha (strain DSM 101675 / C91 / Nm57), this protein is Probable GTP-binding protein EngB.